A 198-amino-acid polypeptide reads, in one-letter code: MELPDPVRQRLSNLSLTMFGDSSRTGPESSEAADNEMVSSLPLQMSLYFNSYFFPLWWVSCIVMLHLKYSVLPDYYKFIVITVVILITLIEAIRLYLGCMGNLQEKVPELAGFWLLSLLLQLPLLLFLLLNEGLKNLPLEKAIHSIFTVFLTFQVISAFLTLKKMVNQLAARFHLQDFDQLSASSATGRRARQSSEEL.

N-linked (GlcNAc...) asparagine glycosylation is present at Asn13. 4 helical membrane-spanning segments follow: residues 47-67, 78-98, 110-130, and 142-162; these read LYFNSYFFPLWWVSCIVMLHL, FIVITVVILITLIEAIRLYLG, LAGFWLLSLLLQLPLLLFLLL, and AIHSIFTVFLTFQVISAFLTL.

This sequence belongs to the TMEM17 family. In terms of assembly, part of the tectonic-like complex (also named B9 complex).

The protein resides in the cell projection. It localises to the cilium membrane. Its function is as follows. Transmembrane component of the tectonic-like complex, a complex localized at the transition zone of primary cilia and acting as a barrier that prevents diffusion of transmembrane proteins between the cilia and plasma membranes. Required for ciliogenesis and sonic hedgehog/SHH signaling. In Rattus norvegicus (Rat), this protein is Transmembrane protein 17 (Tmem17).